The following is a 360-amino-acid chain: Phenylalanine--tRNA ligase alpha subunit (360 aa).

Glu260 serves as a coordination point for Mg(2+).

Belongs to the class-II aminoacyl-tRNA synthetase family. Phe-tRNA synthetase alpha subunit type 1 subfamily. In terms of assembly, tetramer of two alpha and two beta subunits. Requires Mg(2+) as cofactor.

It localises to the cytoplasm. The enzyme catalyses tRNA(Phe) + L-phenylalanine + ATP = L-phenylalanyl-tRNA(Phe) + AMP + diphosphate + H(+). The polypeptide is Phenylalanine--tRNA ligase alpha subunit (Bartonella tribocorum (strain CIP 105476 / IBS 506)).